The following is a 431-amino-acid chain: MHFSKKCSVFKVVLSALLIVALLQLLYLSFLSKLHGKQQRYKYSELFGSKKNANQGEKNPRREHLRYSLSTGGIFDGSGQYRVYKNLIKSDFSTNQKPGADPRSHHLALATHTTINNLHHLESLLERWKNPISVAIFANGEDVKFATAIIYALSLFCPQVQALVDFHLVCHSGEMATFPDQDREHFVGLQEMGCPAVFAKLESHRDKYKNYAIGSNVSYPNNLLRNVARGGTDAAYILVIDIDMIPSANLHHQFVTMLMKREPAADEVLVLPAFEIRHIRKMPASKPELVQLYQVGEVRPFYDELCSRCQAPTNYSLWVNLASKSSGPLEVSYTINWVDPWEPFYIGARSVPLYDESFRQYGFNRISQACELHIAGYRFSVVSNAFLLHKGFKVQGEFHSRKDEENRKNRILFRSFKESLKAKYPTSPRRC.

At 1–11 (MHFSKKCSVFK) the chain is on the cytoplasmic side. Residues 12–32 (VVLSALLIVALLQLLYLSFLS) traverse the membrane as a helical segment. At 33-431 (KLHGKQQRYK…AKYPTSPRRC (399 aa)) the chain is on the lumenal side. N216 carries an N-linked (GlcNAc...) asparagine glycan. Mn(2+) contacts are provided by D241 and D243. N-linked (GlcNAc...) asparagine glycosylation is present at N314.

This sequence belongs to the glycosyltransferase 49 family. The cofactor is Mn(2+).

It is found in the golgi apparatus membrane. It carries out the reaction 3-O-[beta-D-Xyl-(1-&gt;4)-Rib-ol-P-Rib-ol-P-3-beta-D-GalNAc-(1-&gt;3)-beta-D-GlcNAc-(1-&gt;4)-(O-6-P-alpha-D-Man)]-Thr-[protein] + UDP-alpha-D-glucuronate = 3-O-[beta-D-GlcA-(1-&gt;3)-beta-D-Xyl-(1-&gt;4)-Rib-ol-P-Rib-ol-P-3-beta-D-GalNAc-(1-&gt;3)-beta-D-GlcNAc-(1-&gt;4)-(O-6-P-alpha-D-Man)]-Thr-[protein] + UDP + H(+). It participates in protein modification; protein glycosylation. Beta-1,4-glucuronyltransferase involved in O-mannosylation of alpha-dystroglycan (DAG1). Transfers a glucuronic acid (GlcA) residue onto a xylose (Xyl) acceptor to produce the glucuronyl-beta-1,4-xylose-beta disaccharide primer, which is further elongated by LARGE, during synthesis of phosphorylated O-mannosyl glycan. Phosphorylated O-mannosyl glycan is a carbohydrate structure present in alpha-dystroglycan (DAG1), which is required for binding laminin G-like domain-containing extracellular proteins with high affinity. Required for axon guidance; via its function in O-mannosylation of alpha-dystroglycan (DAG1). The protein is Beta-1,4-glucuronyltransferase 1 of Danio rerio (Zebrafish).